Here is a 315-residue protein sequence, read N- to C-terminus: MTMITFLTTTQNGSYDRLATRQAVFLKQNLNVDSQIIRMAQTQLVPVKGSHVIIYTTFNIYPVLINKYRQQLEGKKCVALLDSALMTIPYRNPVFKDPICTVYTTSRFNQENFATLGVSIPYIPHFIPDPNPEGKLKSLSERQYDFITVGINEMDFDRKGHFWNFLVQRWGFKAISVCKFYCFGDHKQDLPDEELWSLYANTKWYLGTSHAETPHLPLLEAYAFGTPAVYISAHEFRYIGFGIPISPAYINVKGTKNFYFAEINTESFIQAVGKAMRMSEGDYNSLSKQARRFFENNYSLNNRVDEFRALFDDSM.

Belongs to the glycosyltransferase group 1 family. Glycosyltransferase 4 subfamily.

In Acidianus convivator (ABV), this protein is Putative glycosyltransferase ORF315.